Reading from the N-terminus, the 103-residue chain is V-type ATP synthase subunit F (103 aa).

Belongs to the V-ATPase F subunit family.

Produces ATP from ADP in the presence of a proton gradient across the membrane. This chain is V-type ATP synthase subunit F, found in Clostridium botulinum (strain Alaska E43 / Type E3).